The sequence spans 398 residues: Phosphoglycerate kinase (398 aa).

Residues 21–23 (DFN), arginine 36, 59–62 (HLGR), arginine 119, and arginine 157 each bind substrate. ATP-binding positions include lysine 208, glycine 296, glutamate 327, and 354–357 (GGDS).

Belongs to the phosphoglycerate kinase family. As to quaternary structure, monomer.

It is found in the cytoplasm. It catalyses the reaction (2R)-3-phosphoglycerate + ATP = (2R)-3-phospho-glyceroyl phosphate + ADP. The protein operates within carbohydrate degradation; glycolysis; pyruvate from D-glyceraldehyde 3-phosphate: step 2/5. This chain is Phosphoglycerate kinase, found in Streptococcus pneumoniae (strain 70585).